The sequence spans 253 residues: Dof zinc finger protein DOF3.4 (253 aa).

The Dof-type zinc-finger motif lies at 30–84 (LPCPRCDSSNTKFCYYNNYNFSQPRHFCKACRRYWTHGGTLRDVPVGGGTRKSAK). The Zn(2+) site is built by cysteine 32, cysteine 35, cysteine 57, and cysteine 60. The segment at 73-103 (VPVGGGTRKSAKRSRTCSNSSSSSVSGVVSN) is disordered. The segment covering 90–103 (SNSSSSSVSGVVSN) has biased composition (low complexity).

In terms of assembly, interacts with OBF4 or OBF5. Constitutively expressed in the whole plant.

The protein resides in the nucleus. In terms of biological role, transcription factor that binds specifically to a 5'-AA[AG]G-3' consensus core sequence. Enhances the DNA binding of OBF transcription factors to OCS elements. In Arabidopsis thaliana (Mouse-ear cress), this protein is Dof zinc finger protein DOF3.4 (DOF3.4).